The primary structure comprises 655 residues: Tumor necrosis factor receptor superfamily member 21 (655 aa).

A signal peptide spans 1–41 (MGTRASSITALASCSRTAGQVGATMVAGSLLLLGFLSTITA). Topologically, residues 42–349 (QPEQKTLSLP…AHKHFDINEH (308 aa)) are extracellular. 4 TNFR-Cys repeats span residues 50-88 (LPGTYRHVDRTTGQVLTCDKCPAGTYVSEHCTNMSLRVC), 90-131 (SCPA…DREC), 133-167 (CPPGMYQSNGTCAPHTVCPVGWGVRKKGTENEDVR), and 170-211 (QCAR…DNVC). Intrachain disulfides connect C67/C80, C70/C88, C91/C106, C109/C123, C113/C131, C133/C144, C150/C168, C171/C186, and C192/C211. N82 carries N-linked (GlcNAc...) asparagine glycosylation. A glycan (N-linked (GlcNAc...) asparagine) is linked at N141. Disordered stretches follow at residues 222 to 305 (PPSS…QAPH) and 318 to 339 (EATGEKSSTAIKAPKRGHPRQN). Composition is skewed to polar residues over residues 241-262 (VPSSTYEPQGMNSTDSNSTASV) and 276-302 (PDNTSSTSGKEGTNRTLPNPPQVTHQQ). Residues N252, N257, N278, and N289 are each glycosylated (N-linked (GlcNAc...) asparagine). Residues 330–339 (APKRGHPRQN) are compositionally biased toward basic residues. Residues 350 to 370 (LPWMIVLFLLLVLVLIVVCSI) traverse the membrane as a helical segment. C368 carries S-palmitoyl cysteine lipidation. At 371-655 (RKSSRTLKKG…SVYSHLPDLL (285 aa)) the chain is on the cytoplasmic side. The 84-residue stretch at 415 to 498 (GIDILKLVAA…DVVEKIRGLM (84 aa)) folds into the Death domain.

In terms of assembly, associates with TRADD. Interacts with NGFR. Interacts with CASP8. Post-translationally, oxidized in response to reactive oxygen species (ROS), leading to endocytosis. As to expression, detected in spleen B-cells (at protein level). Ubiquitous. Highly expressed in adult spleen, thymus, testis, prostate, ovary, small intestine, colon, brain, lung and kidney, and in fetal brain, liver and lung. Detected at lower levels in adult peripheral blood leukocytes, lung, and in fetal muscle, heart, kidney, small intestine and skin. Detected in T-cells, B-cells and monocytes. In T-cells expression is highest in Th0 cells, intermediate in Th2 cells and lower in Th1 cells. Expressed at low levels in proliferating progenitors in the spinal cord, but is highly expressed by differentiating neurons within the spinal cord and adjacent dorsal root ganglia.

The protein localises to the cell membrane. Functionally, promotes apoptosis, possibly via a pathway that involves the activation of NF-kappa-B. Can also promote apoptosis mediated by BAX and by the release of cytochrome c from the mitochondria into the cytoplasm. Trophic-factor deprivation triggers the cleavage of surface APP by beta-secretase to release sAPP-beta which is further cleaved to release an N-terminal fragment of APP (N-APP). Negatively regulates oligodendrocyte survival, maturation and myelination. Plays a role in signaling cascades triggered by stimulation of T-cell receptors, in the adaptive immune response and in the regulation of T-cell differentiation and proliferation. Negatively regulates T-cell responses and the release of cytokines such as IL4, IL5, IL10, IL13 and IFNG by Th2 cells. Negatively regulates the production of IgG, IgM and IgM in response to antigens. May inhibit the activation of JNK in response to T-cell stimulation. Also acts as a regulator of pyroptosis: recruits CASP8 in response to reactive oxygen species (ROS) and subsequent oxidation, leading to activation of GSDMC. This is Tumor necrosis factor receptor superfamily member 21 (Tnfrsf21) from Mus musculus (Mouse).